The following is a 455-amino-acid chain: ADP-dependent glucose/glucosamine kinase (455 aa).

In terms of domain architecture, ADPK spans 2-455 (PTWEELYKNA…AFIGEFSFTL (454 aa)). Residues Asp-34, Glu-88, 112–113 (GQ), and His-176 contribute to the D-glucose site. Residue Glu-195 participates in ADP binding. Glu-266 is a binding site for Mg(2+). Residue Asn-292 participates in ADP binding. Glu-295 contacts Mg(2+). Residues 342-343 (HT), Val-429, and Gly-439 each bind ADP. Residue Asp-440 participates in D-glucose binding. Mg(2+) is bound at residue Asp-440. Asp-440 functions as the Proton acceptor in the catalytic mechanism.

This sequence belongs to the ADP-dependent glucokinase family. Homodimer. The cofactor is Mg(2+).

The protein resides in the cytoplasm. It carries out the reaction D-glucose + ADP = D-glucose 6-phosphate + AMP + H(+). It catalyses the reaction D-glucosamine + ADP = D-glucosamine 6-phosphate + AMP + H(+). It participates in carbohydrate degradation; glycolysis. In terms of biological role, catalyzes the ADP-dependent phosphorylation of D-glucose to D-glucose 6-phosphate and glucosamine to glucosamine 6-phosphate. Can also use CDP as the phosphoryl group donor and D-1,5-anhydroglucitol as the phosphoryl group acceptor. This is ADP-dependent glucose/glucosamine kinase from Pyrococcus furiosus (strain ATCC 43587 / DSM 3638 / JCM 8422 / Vc1).